The sequence spans 510 residues: NAD(P)H-quinone oxidoreductase subunit 2, chloroplastic (510 aa).

12 helical membrane passes run 24-44 (LLLF…GLIL), 59-79 (WFYF…LFRW), 99-119 (IFQF…VEYI), 124-144 (MAIT…MFLC), 149-169 (LITI…LSGY), 183-203 (YLLM…WLYG), 229-249 (ISIA…PAPF), 295-315 (WHLL…LIAI), 323-343 (MLAY…IVGD), 347-367 (GYAS…GTFA), 395-415 (ALSS…AGFF), and 418-438 (LHLF…IGLL).

It belongs to the complex I subunit 2 family. As to quaternary structure, NDH is composed of at least 16 different subunits, 5 of which are encoded in the nucleus.

It is found in the plastid. Its subcellular location is the chloroplast thylakoid membrane. It catalyses the reaction a plastoquinone + NADH + (n+1) H(+)(in) = a plastoquinol + NAD(+) + n H(+)(out). The enzyme catalyses a plastoquinone + NADPH + (n+1) H(+)(in) = a plastoquinol + NADP(+) + n H(+)(out). In terms of biological role, NDH shuttles electrons from NAD(P)H:plastoquinone, via FMN and iron-sulfur (Fe-S) centers, to quinones in the photosynthetic chain and possibly in a chloroplast respiratory chain. The immediate electron acceptor for the enzyme in this species is believed to be plastoquinone. Couples the redox reaction to proton translocation, and thus conserves the redox energy in a proton gradient. This chain is NAD(P)H-quinone oxidoreductase subunit 2, chloroplastic, found in Yucca glauca (Soapweed yucca).